Here is a 297-residue protein sequence, read N- to C-terminus: Malonyl-[acyl-carrier protein] O-methyltransferase (297 aa).

This sequence belongs to the methyltransferase superfamily.

The catalysed reaction is malonyl-[ACP] + S-adenosyl-L-methionine = malonyl-[ACP] methyl ester + S-adenosyl-L-homocysteine. It participates in cofactor biosynthesis; biotin biosynthesis. Functionally, converts the free carboxyl group of a malonyl-thioester to its methyl ester by transfer of a methyl group from S-adenosyl-L-methionine (SAM). It allows to synthesize pimeloyl-ACP via the fatty acid synthetic pathway. This Laribacter hongkongensis (strain HLHK9) protein is Malonyl-[acyl-carrier protein] O-methyltransferase.